A 457-amino-acid chain; its full sequence is Flavohemoprotein-1 (457 aa).

The Globin domain occupies 2–157; the sequence is ALSEDTIKAV…LADLLIKREE (156 aa). Residue His106 coordinates heme b. Active-site charge relay system residues include Tyr116 and Glu156. Residues 168–456 form a reductase region; it reads GGWRQTRTFR…FEMFGPFKAS (289 aa). Residues 171-278 enclose the FAD-binding FR-type domain; the sequence is RQTRTFRVEE…APPYGDFFLR (108 aa). Residues Tyr210 and 227–230 each bind FAD; that span reads RQYS. 320 to 325 is a binding site for NADP(+); it reads GIGQTP. 449 to 452 contacts FAD; the sequence is MFGP.

Belongs to the globin family. Two-domain flavohemoproteins subfamily. It in the C-terminal section; belongs to the flavoprotein pyridine nucleotide cytochrome reductase family. As to quaternary structure, monomer. The cofactor is heme b. FAD serves as cofactor.

The enzyme catalyses 2 nitric oxide + NADPH + 2 O2 = 2 nitrate + NADP(+) + H(+). It catalyses the reaction 2 nitric oxide + NADH + 2 O2 = 2 nitrate + NAD(+) + H(+). Its function is as follows. Flavohemoprotein involved in nitric oxide (NO) detoxification in an aerobic process, termed nitric oxide dioxygenase (NOD) reaction that utilizes O(2) and NAD(P)H to convert NO to nitrate, which protects the protozoan parasite from various noxious nitrogen compounds. Therefore, plays a central role in the inducible response to nitrosative stress. May also be involved in O(2) detoxification. In Giardia intestinalis (strain P15) (Giardia lamblia), this protein is Flavohemoprotein-1 (hmpA-1).